The following is a 269-amino-acid chain: Glutamate racemase (269 aa).

Substrate-binding positions include 7–8 (DS) and 39–40 (YG). Cysteine 70 (proton donor/acceptor) is an active-site residue. Position 71 to 72 (71 to 72 (NT)) interacts with substrate. Catalysis depends on cysteine 194, which acts as the Proton donor/acceptor. A substrate-binding site is contributed by 195–196 (TH).

The protein belongs to the aspartate/glutamate racemases family.

The catalysed reaction is L-glutamate = D-glutamate. It participates in cell wall biogenesis; peptidoglycan biosynthesis. Its function is as follows. Provides the (R)-glutamate required for cell wall biosynthesis. In Roseobacter denitrificans (strain ATCC 33942 / OCh 114) (Erythrobacter sp. (strain OCh 114)), this protein is Glutamate racemase.